We begin with the raw amino-acid sequence, 415 residues long: MATAKLISQKAKAHAPSLSQATTAEKNSVLQAMAQQLKADADVLLQANQLDIANAKKNGLSDHLIDRLLLTKARIDAMATAIDHLIELPEPIGAVKEEIKRPNGLVIKEMVVPFGVVGMIYEARPNVTVDACTLAVKTGNAVVLRGSASALHSNKAIVHTLKKAFQNSPIHPDVIQLLEDTSKEEAANMMQLKSTIDVLIPRGGANLIQTVLQEATIPVIETGVGNCHVYVASSADPDMAFDIVVNAKTQRPSVCNACETLLVEQSFAKAHLPALVERLSAKGVSLVGNEGACTLDPRIAQANEDDWSTEYLDLRLAIRVVADTNEAIAHINQYGTKHSEAIITESLAERDTFFATVDAACVYHNASTRFTDGFEFGFGAEIGISTQKLHARGPMGLKALTTSKYGIYGEGQVKE.

This sequence belongs to the gamma-glutamyl phosphate reductase family.

The protein localises to the cytoplasm. The enzyme catalyses L-glutamate 5-semialdehyde + phosphate + NADP(+) = L-glutamyl 5-phosphate + NADPH + H(+). It participates in amino-acid biosynthesis; L-proline biosynthesis; L-glutamate 5-semialdehyde from L-glutamate: step 2/2. In terms of biological role, catalyzes the NADPH-dependent reduction of L-glutamate 5-phosphate into L-glutamate 5-semialdehyde and phosphate. The product spontaneously undergoes cyclization to form 1-pyrroline-5-carboxylate. The chain is Gamma-glutamyl phosphate reductase from Shouchella clausii (strain KSM-K16) (Alkalihalobacillus clausii).